Here is an 80-residue protein sequence, read N- to C-terminus: Venom protein HGE029 (80 aa).

The signal sequence occupies residues 1 to 22 (MNAKAFLAIFMIALLITDRAEA).

The protein belongs to the non-disulfide-bridged peptide (NDBP) superfamily. Long chain multifunctional peptide (group 2) family. In terms of tissue distribution, expressed by the venom gland.

The protein resides in the secreted. This is Venom protein HGE029 from Hoffmannihadrurus gertschi (Scorpion).